The primary structure comprises 572 residues: Proline--tRNA ligase (572 aa).

This sequence belongs to the class-II aminoacyl-tRNA synthetase family. ProS type 1 subfamily. Homodimer.

Its subcellular location is the cytoplasm. It carries out the reaction tRNA(Pro) + L-proline + ATP = L-prolyl-tRNA(Pro) + AMP + diphosphate. Catalyzes the attachment of proline to tRNA(Pro) in a two-step reaction: proline is first activated by ATP to form Pro-AMP and then transferred to the acceptor end of tRNA(Pro). As ProRS can inadvertently accommodate and process non-cognate amino acids such as alanine and cysteine, to avoid such errors it has two additional distinct editing activities against alanine. One activity is designated as 'pretransfer' editing and involves the tRNA(Pro)-independent hydrolysis of activated Ala-AMP. The other activity is designated 'posttransfer' editing and involves deacylation of mischarged Ala-tRNA(Pro). The misacylated Cys-tRNA(Pro) is not edited by ProRS. The sequence is that of Proline--tRNA ligase from Hydrogenovibrio crunogenus (strain DSM 25203 / XCL-2) (Thiomicrospira crunogena).